The primary structure comprises 348 residues: Protein pof5 (348 aa).

The protein to yeast YDR306C. Interacts with skp1.

Its subcellular location is the mitochondrion. The protein is Protein pof5 (pof5) of Schizosaccharomyces pombe (strain 972 / ATCC 24843) (Fission yeast).